The chain runs to 362 residues: Chorismate synthase (362 aa).

Arg-46 serves as a coordination point for NADP(+). Residues 122 to 124 (RSS), 238 to 239 (NA), Gly-278, 293 to 297 (KPTPS), and Arg-319 each bind FMN.

The protein belongs to the chorismate synthase family. Homotetramer. FMNH2 is required as a cofactor.

It carries out the reaction 5-O-(1-carboxyvinyl)-3-phosphoshikimate = chorismate + phosphate. It functions in the pathway metabolic intermediate biosynthesis; chorismate biosynthesis; chorismate from D-erythrose 4-phosphate and phosphoenolpyruvate: step 7/7. In terms of biological role, catalyzes the anti-1,4-elimination of the C-3 phosphate and the C-6 proR hydrogen from 5-enolpyruvylshikimate-3-phosphate (EPSP) to yield chorismate, which is the branch point compound that serves as the starting substrate for the three terminal pathways of aromatic amino acid biosynthesis. This reaction introduces a second double bond into the aromatic ring system. The polypeptide is Chorismate synthase (Campylobacter jejuni subsp. jejuni serotype O:23/36 (strain 81-176)).